We begin with the raw amino-acid sequence, 128 residues long: Large ribosomal subunit protein bL17 (128 aa).

The protein belongs to the bacterial ribosomal protein bL17 family. As to quaternary structure, part of the 50S ribosomal subunit. Contacts protein L32.

This Streptococcus suis (strain 98HAH33) protein is Large ribosomal subunit protein bL17.